We begin with the raw amino-acid sequence, 201 residues long: MAQHDENVVWHAHPVTQQQREQHHGHRGVVLWFTGLSGSGKSTVAGALEEALHERGVSTYLLDGDNVRHGLCSDLGFSDEDRKENIRRVGEVARLMVDAGLVVLTAFISPHRAERQMVRERLGEGRFIEVFVDTPLAICEARDPKGLYKKARAGELRNFTGIDSVYEAPEKAEIHLDGEQLVTNLVHQLLDLLQQSDIIRS.

G35 to S42 lines the ATP pocket. The active-site Phosphoserine intermediate is the S109.

It belongs to the APS kinase family.

It carries out the reaction adenosine 5'-phosphosulfate + ATP = 3'-phosphoadenylyl sulfate + ADP + H(+). It participates in sulfur metabolism; hydrogen sulfide biosynthesis; sulfite from sulfate: step 2/3. Its function is as follows. Catalyzes the synthesis of activated sulfate. This chain is Adenylyl-sulfate kinase, found in Klebsiella pneumoniae (strain 342).